The sequence spans 279 residues: RRP15-like protein (279 aa).

Disordered stretches follow at residues 1-40 (MALLTAKRPKKEAAPATDTSNNESDSEDSQNVDGDTGANA), 56-120 (GPTV…TERR), and 200-279 (KSTA…DEED). A compositionally biased stretch (basic and acidic residues) spans 73 to 83 (KTSEAAKKPGF). Acidic residues-rich tracts occupy residues 93–104 (KEEDDDDEEDGD) and 213–224 (QETDDDDEDDTA). Residues 232-245 (KKSEWNVLREDFMT) show a composition bias toward basic and acidic residues. The segment covering 267-279 (DEADDSDDDDEED) has biased composition (acidic residues).

It belongs to the RRP15 family.

This chain is RRP15-like protein, found in Drosophila pseudoobscura pseudoobscura (Fruit fly).